A 323-amino-acid chain; its full sequence is MFEQENWQPSASIENLLARAKIIAEIRRFFTDRGLLEVETPVLSEFGVTDVHLSTFNTTFISPTAEKSKALWLSTSPEYHMKRLLAAGSGPIFQLCHVFRNEEAGQRHNPEFTMLEWYRPHFDMYRLINEVDDLLQQILDCKPTESLSYQFVFQEYVGLDPLSAEKAELVAKAKQYHLQQAEQEDRDTLLQFLFSTVVEPNIGKENPVAVYHFPATQAALAQISSEDHRVAERFEFYYKGLELANGFHELTDVNEQLHRFEQDNVQRQKMGLPQRQIDKRLLGALQAGVPNCSGIALGVDRLLMIALGANAIHEVMAFGIENA.

Substrate is bound at residue 76 to 78 (SPE). ATP-binding positions include 100-102 (RNE) and Asn-109. Tyr-118 contacts substrate. 242-243 (EL) contacts ATP. Position 249 (Glu-249) interacts with substrate. Gly-298 is a binding site for ATP.

This sequence belongs to the class-II aminoacyl-tRNA synthetase family. EpmA subfamily. As to quaternary structure, homodimer.

The catalysed reaction is D-beta-lysine + L-lysyl-[protein] + ATP = N(6)-((3R)-3,6-diaminohexanoyl)-L-lysyl-[protein] + AMP + diphosphate + H(+). In terms of biological role, with EpmB is involved in the beta-lysylation step of the post-translational modification of translation elongation factor P (EF-P). Catalyzes the ATP-dependent activation of (R)-beta-lysine produced by EpmB, forming a lysyl-adenylate, from which the beta-lysyl moiety is then transferred to the epsilon-amino group of a conserved specific lysine residue in EF-P. The sequence is that of Elongation factor P--(R)-beta-lysine ligase from Pasteurella multocida (strain Pm70).